Reading from the N-terminus, the 84-residue chain is Small ribosomal subunit protein bS18 (84 aa).

This sequence belongs to the bacterial ribosomal protein bS18 family. Part of the 30S ribosomal subunit. Forms a tight heterodimer with protein bS6.

Its function is as follows. Binds as a heterodimer with protein bS6 to the central domain of the 16S rRNA, where it helps stabilize the platform of the 30S subunit. The protein is Small ribosomal subunit protein bS18 of Polynucleobacter necessarius subsp. necessarius (strain STIR1).